The sequence spans 100 residues: Class II hydrophobin FOXG_02746 (100 aa).

A signal peptide spans Met-1–Ala-17. 4 disulfide bridges follow: Cys-29–Cys-79, Cys-40–Cys-70, Cys-41–Cys-53, and Cys-80–Cys-92.

It belongs to the cerato-ulmin hydrophobin family. Homodimer. Homodimers further self-assemble to form highly ordered films at water-air interfaces through intermolecular interactions.

It is found in the secreted. It localises to the cell wall. Functionally, aerial growth, conidiation, and dispersal of filamentous fungi in the environment rely upon a capability of their secreting small amphipathic proteins called hydrophobins (HPBs) with low sequence identity. Class I can self-assemble into an outermost layer of rodlet bundles on aerial cell surfaces, conferring cellular hydrophobicity that supports fungal growth, development and dispersal; whereas Class II form highly ordered films at water-air interfaces through intermolecular interactions but contribute nothing to the rodlet structure. FOXG_02746 is a class II hydrophobin that is likely required for plant colonization. In Fusarium oxysporum f. sp. lycopersici (strain 4287 / CBS 123668 / FGSC 9935 / NRRL 34936) (Fusarium vascular wilt of tomato), this protein is Class II hydrophobin FOXG_02746.